Consider the following 251-residue polypeptide: MNLNSIPAFQDNYIWVLTNDEGRCVIVDPGEAAPVLKAIAEHKWMPEAIFLTHHHHDHVGGVKELLQHFPQMTVYGPAETKDKGATHLVGDGDTIRVLGEKFTLFATPGHTLGHVCYFSHPYLFCGDTLFSGGCGRLFEGTPSQMYQSLMKINSLPDDTLICCAHEYTLANIKFALSILPHDSFINEYYRKVKELRVKKQMTLPVILKNERKINLFLRTEDIDLINEINKETILQQPEARFAWLRSKKDTF.

The Zn(2+) site is built by H53, H55, D57, H58, H110, D127, and H165.

This sequence belongs to the metallo-beta-lactamase superfamily. Glyoxalase II family. In terms of assembly, monomer. Zn(2+) is required as a cofactor.

The enzyme catalyses an S-(2-hydroxyacyl)glutathione + H2O = a 2-hydroxy carboxylate + glutathione + H(+). It functions in the pathway secondary metabolite metabolism; methylglyoxal degradation; (R)-lactate from methylglyoxal: step 2/2. Its function is as follows. Thiolesterase that catalyzes the hydrolysis of S-D-lactoyl-glutathione to form glutathione and D-lactic acid. The chain is Hydroxyacylglutathione hydrolase from Salmonella gallinarum (strain 287/91 / NCTC 13346).